The following is a 275-amino-acid chain: NADH-quinone oxidoreductase subunit E 1 (275 aa).

Residues cysteine 99, cysteine 104, cysteine 140, and cysteine 144 each coordinate [2Fe-2S] cluster. A disordered region spans residues 200–275 (LQAPEPVEEK…DKSKPAKKPR (76 aa)). Over residues 206–221 (VEEKKSVRASKAKDEQ) the composition is skewed to basic and acidic residues. Residues 231–242 (AKPSTATDVTNP) are compositionally biased toward polar residues. Low complexity predominate over residues 243-256 (TLKTPATARKAAAK). Basic and acidic residues predominate over residues 258–269 (VKIEGETVDKSK).

Belongs to the complex I 24 kDa subunit family. The cofactor is [2Fe-2S] cluster.

The catalysed reaction is a quinone + NADH + 5 H(+)(in) = a quinol + NAD(+) + 4 H(+)(out). NDH-1 shuttles electrons from NADH, via FMN and iron-sulfur (Fe-S) centers, to quinones in the respiratory chain. The immediate electron acceptor for the enzyme in this species is believed to be ubiquinone. Couples the redox reaction to proton translocation (for every two electrons transferred, four hydrogen ions are translocated across the cytoplasmic membrane), and thus conserves the redox energy in a proton gradient. The polypeptide is NADH-quinone oxidoreductase subunit E 1 (nuoE1) (Rhizobium meliloti (strain 1021) (Ensifer meliloti)).